The following is a 507-amino-acid chain: Alkyl hydroperoxide reductase subunit F (507 aa).

An FAD-binding site is contributed by 207-222; sequence DVLIVGGGPASGSAAI. Cysteine 335 and cysteine 338 are joined by a disulfide. 347-361 contacts NAD(+); it reads DVAVIGGGNSGVEAA. 467 to 477 provides a ligand contact to FAD; that stretch reads TNVPGIFAAGD.

Belongs to the class-II pyridine nucleotide-disulfide oxidoreductase family. Homodimer. Requires FAD as cofactor.

Functionally, serves to protect the cell against DNA damage by alkyl hydroperoxides. It can use either NADH or NADPH as electron donor for direct reduction of redox dyes or of alkyl hydroperoxides when combined with the AhpC protein. The protein is Alkyl hydroperoxide reductase subunit F (ahpF) of Staphylococcus aureus (strain MSSA476).